Consider the following 251-residue polypeptide: 1-(5-phosphoribosyl)-5-[(5-phosphoribosylamino)methylideneamino] imidazole-4-carboxamide isomerase (251 aa).

Asp8 (proton acceptor) is an active-site residue. Asp131 (proton donor) is an active-site residue.

Belongs to the HisA/HisF family.

The protein localises to the cytoplasm. The enzyme catalyses 1-(5-phospho-beta-D-ribosyl)-5-[(5-phospho-beta-D-ribosylamino)methylideneamino]imidazole-4-carboxamide = 5-[(5-phospho-1-deoxy-D-ribulos-1-ylimino)methylamino]-1-(5-phospho-beta-D-ribosyl)imidazole-4-carboxamide. The protein operates within amino-acid biosynthesis; L-histidine biosynthesis; L-histidine from 5-phospho-alpha-D-ribose 1-diphosphate: step 4/9. This is 1-(5-phosphoribosyl)-5-[(5-phosphoribosylamino)methylideneamino] imidazole-4-carboxamide isomerase from Burkholderia lata (strain ATCC 17760 / DSM 23089 / LMG 22485 / NCIMB 9086 / R18194 / 383).